A 381-amino-acid polypeptide reads, in one-letter code: Queuine tRNA-ribosyltransferase (381 aa).

The active-site Proton acceptor is Asp-92. Residues 92 to 96 (DSGGF), Asp-146, Gln-190, and Gly-217 contribute to the substrate site. The segment at 248-254 (GVGRPED) is RNA binding. The active-site Nucleophile is the Asp-267. The tract at residues 272–276 (TRNAR) is RNA binding; important for wobble base 34 recognition. The Zn(2+) site is built by Cys-305, Cys-307, Cys-310, and His-337.

Belongs to the queuine tRNA-ribosyltransferase family. Homodimer. Within each dimer, one monomer is responsible for RNA recognition and catalysis, while the other monomer binds to the replacement base PreQ1. It depends on Zn(2+) as a cofactor.

The enzyme catalyses 7-aminomethyl-7-carbaguanine + guanosine(34) in tRNA = 7-aminomethyl-7-carbaguanosine(34) in tRNA + guanine. Its pathway is tRNA modification; tRNA-queuosine biosynthesis. Functionally, catalyzes the base-exchange of a guanine (G) residue with the queuine precursor 7-aminomethyl-7-deazaguanine (PreQ1) at position 34 (anticodon wobble position) in tRNAs with GU(N) anticodons (tRNA-Asp, -Asn, -His and -Tyr). Catalysis occurs through a double-displacement mechanism. The nucleophile active site attacks the C1' of nucleotide 34 to detach the guanine base from the RNA, forming a covalent enzyme-RNA intermediate. The proton acceptor active site deprotonates the incoming PreQ1, allowing a nucleophilic attack on the C1' of the ribose to form the product. After dissociation, two additional enzymatic reactions on the tRNA convert PreQ1 to queuine (Q), resulting in the hypermodified nucleoside queuosine (7-(((4,5-cis-dihydroxy-2-cyclopenten-1-yl)amino)methyl)-7-deazaguanosine). The polypeptide is Queuine tRNA-ribosyltransferase (Xanthomonas campestris pv. campestris (strain B100)).